The chain runs to 396 residues: Elongation factor Tu (396 aa).

A tr-type G domain is found at 11–205 (KPHVNIGTIG…TVDEYIPTPE (195 aa)). The G1 stretch occupies residues 20–27 (GHVDHGKT). 20–27 (GHVDHGKT) serves as a coordination point for GTP. T27 contributes to the Mg(2+) binding site. The G2 stretch occupies residues 61–65 (GITIN). The tract at residues 82–85 (DAPG) is G3. Residues 82–86 (DAPGH) and 137–140 (NKVD) contribute to the GTP site. The segment at 137–140 (NKVD) is G4. A G5 region spans residues 175–177 (SAL).

Belongs to the TRAFAC class translation factor GTPase superfamily. Classic translation factor GTPase family. EF-Tu/EF-1A subfamily. Monomer.

The protein localises to the cytoplasm. It catalyses the reaction GTP + H2O = GDP + phosphate + H(+). Its function is as follows. GTP hydrolase that promotes the GTP-dependent binding of aminoacyl-tRNA to the A-site of ribosomes during protein biosynthesis. This chain is Elongation factor Tu, found in Lactobacillus johnsonii (strain CNCM I-12250 / La1 / NCC 533).